The following is a 134-amino-acid chain: Transcription antitermination protein NusB (134 aa).

This sequence belongs to the NusB family.

Its function is as follows. Involved in transcription antitermination. Required for transcription of ribosomal RNA (rRNA) genes. Binds specifically to the boxA antiterminator sequence of the ribosomal RNA (rrn) operons. The sequence is that of Transcription antitermination protein NusB from Shewanella woodyi (strain ATCC 51908 / MS32).